The following is a 156-amino-acid chain: Transthyretin-like protein 1 (156 aa).

Residues 1–17 (MKIALSFLFLTSTFSNA) form the signal peptide. N-linked (GlcNAc...) asparagine glycosylation occurs at Asn151.

This sequence belongs to the nematode transthyretin-like family.

The protein localises to the secreted. The chain is Transthyretin-like protein 1 (ttr-1) from Caenorhabditis elegans.